The chain runs to 610 residues: Zinc metalloproteinase-disintegrin-like 3a (610 aa).

Residues 1–19 form the signal peptide; it reads MIQVLLVTILAVFPYQGSS. The propeptide occupies 20-188; that stretch reads IILGSGNVND…KKASQLVVTA (169 aa). The Peptidase M12B domain occupies 198 to 394; that stretch reads RYVELVIVAD…YTPKCILNEP (197 aa). A Ca(2+)-binding site is contributed by Glu-201. Asn-217 is a glycosylation site (N-linked (GlcNAc...) asparagine). Asp-285 lines the Ca(2+) pocket. 3 disulfides stabilise this stretch: Cys-309/Cys-389, Cys-349/Cys-373, and Cys-351/Cys-356. His-334 is a Zn(2+) binding site. The active site involves Glu-335. Residues His-338 and His-344 each coordinate Zn(2+). 7 residues coordinate Ca(2+): Cys-389, Asn-392, Val-404, Asn-407, Glu-411, Glu-414, and Asp-417. Positions 402 to 488 constitute a Disintegrin domain; the sequence is PPVCGNELLE…DCPTDDFHKN (87 aa). 14 disulfides stabilise this stretch: Cys-405–Cys-434, Cys-416–Cys-429, Cys-418–Cys-424, Cys-428–Cys-451, Cys-442–Cys-448, Cys-447–Cys-473, Cys-460–Cys-480, Cys-467–Cys-499, Cys-492–Cys-504, Cys-511–Cys-561, Cys-526–Cys-572, Cys-539–Cys-549, Cys-556–Cys-598, and Cys-592–Cys-603. Residues 466–468 carry the D/ECD-tripeptide motif; sequence ECD.

It belongs to the venom metalloproteinase (M12B) family. P-III subfamily. Zn(2+) serves as cofactor. Expressed by the venom gland.

It is found in the secreted. In terms of biological role, snake venom metalloproteinase that impairs hemostasis in the envenomed animal. The protein is Zinc metalloproteinase-disintegrin-like 3a of Crotalus adamanteus (Eastern diamondback rattlesnake).